Here is a 251-residue protein sequence, read N- to C-terminus: NADPH-dependent oxidoreductase (251 aa).

The protein belongs to the flavin oxidoreductase frp family. FMN serves as cofactor.

Reduces FMN, organic nitro compounds and disulfide DTNB. Involved in maintenance of the cellular redox state and the disulfide stress response. The polypeptide is NADPH-dependent oxidoreductase (nfrA) (Staphylococcus epidermidis (strain ATCC 35984 / DSM 28319 / BCRC 17069 / CCUG 31568 / BM 3577 / RP62A)).